Consider the following 235-residue polypeptide: 2-C-methyl-D-erythritol 4-phosphate cytidylyltransferase (235 aa).

The protein belongs to the IspD/TarI cytidylyltransferase family. IspD subfamily.

It carries out the reaction 2-C-methyl-D-erythritol 4-phosphate + CTP + H(+) = 4-CDP-2-C-methyl-D-erythritol + diphosphate. It functions in the pathway isoprenoid biosynthesis; isopentenyl diphosphate biosynthesis via DXP pathway; isopentenyl diphosphate from 1-deoxy-D-xylulose 5-phosphate: step 2/6. Functionally, catalyzes the formation of 4-diphosphocytidyl-2-C-methyl-D-erythritol from CTP and 2-C-methyl-D-erythritol 4-phosphate (MEP). In Pseudomonas fluorescens (strain ATCC BAA-477 / NRRL B-23932 / Pf-5), this protein is 2-C-methyl-D-erythritol 4-phosphate cytidylyltransferase.